Reading from the N-terminus, the 260-residue chain is MQRNGLIGDTIRSLGFLSRLPLPQGWFDNTDDSLPRNARAFPLAGGILGLLAGVALLIANAISLPPLAAALIAIGALAAMTGALHEDGLGDTADGFFGASTPDRRLDIMKDSRIGTFAALTLVIWTGVKASLLMAIIARAGAGYALLALIGTEAASRAGMLAFWHALPSARPGGLADSMGQPQWETVVCGCGLGLALLAIGFLPSGGMVALINALVLMTVVLFGFARLCMAKIGGQTGDTLGAAQQIGSLAALIGLVMAL.

The next 7 membrane-spanning stretches (helical) occupy residues 42–62 (PLAG…ANAI), 64–84 (LPPL…TGAL), 117–137 (FAAL…MAII), 144–164 (YALL…LAFW), 192–212 (GLGL…VALI), 214–234 (ALVL…AKIG), and 240–260 (TLGA…VMAL).

It belongs to the CobS family. Mg(2+) serves as cofactor.

The protein resides in the cell inner membrane. It catalyses the reaction alpha-ribazole + adenosylcob(III)inamide-GDP = adenosylcob(III)alamin + GMP + H(+). The enzyme catalyses alpha-ribazole 5'-phosphate + adenosylcob(III)inamide-GDP = adenosylcob(III)alamin 5'-phosphate + GMP + H(+). It participates in cofactor biosynthesis; adenosylcobalamin biosynthesis; adenosylcobalamin from cob(II)yrinate a,c-diamide: step 7/7. Its function is as follows. Joins adenosylcobinamide-GDP and alpha-ribazole to generate adenosylcobalamin (Ado-cobalamin). Also synthesizes adenosylcobalamin 5'-phosphate from adenosylcobinamide-GDP and alpha-ribazole 5'-phosphate. The polypeptide is Adenosylcobinamide-GDP ribazoletransferase (Brucella abortus (strain S19)).